Here is a 324-residue protein sequence, read N- to C-terminus: tRNA dimethylallyltransferase (324 aa).

17–24 (GPTASGKT) lines the ATP pocket. 19 to 24 (TASGKT) lines the substrate pocket. Interaction with substrate tRNA regions lie at residues 42 to 45 (DSAL), 166 to 170 (QRIQR), 251 to 256 (RCVGYR), and 284 to 291 (KRQITWLR).

The protein belongs to the IPP transferase family. As to quaternary structure, monomer. Requires Mg(2+) as cofactor.

It catalyses the reaction adenosine(37) in tRNA + dimethylallyl diphosphate = N(6)-dimethylallyladenosine(37) in tRNA + diphosphate. Catalyzes the transfer of a dimethylallyl group onto the adenine at position 37 in tRNAs that read codons beginning with uridine, leading to the formation of N6-(dimethylallyl)adenosine (i(6)A). The sequence is that of tRNA dimethylallyltransferase from Burkholderia ambifaria (strain MC40-6).